We begin with the raw amino-acid sequence, 247 residues long: 2,3-bisphosphoglycerate-dependent phosphoglycerate mutase (247 aa).

Residues Arg-9–Asn-16, Thr-22–Gly-23, Arg-61, Glu-88–Tyr-91, Lys-99, Arg-115–Arg-116, and Gly-183–Asn-184 contribute to the substrate site. His-10 acts as the Tele-phosphohistidine intermediate in catalysis. Glu-88 acts as the Proton donor/acceptor in catalysis.

It belongs to the phosphoglycerate mutase family. BPG-dependent PGAM subfamily.

It catalyses the reaction (2R)-2-phosphoglycerate = (2R)-3-phosphoglycerate. It participates in carbohydrate degradation; glycolysis; pyruvate from D-glyceraldehyde 3-phosphate: step 3/5. Functionally, catalyzes the interconversion of 2-phosphoglycerate and 3-phosphoglycerate. This Nocardioides sp. (strain ATCC BAA-499 / JS614) protein is 2,3-bisphosphoglycerate-dependent phosphoglycerate mutase.